The following is a 435-amino-acid chain: Legumain (435 aa).

The N-terminal stretch at 1-17 (MTWRVAVLLSLVLGAGA) is a signal peptide. An N-linked (GlcNAc...) asparagine glycan is attached at Asn-93. Residue His-150 is part of the active site. N-linked (GlcNAc...) asparagine glycosylation occurs at Asn-169. The active-site Nucleophile is Cys-191. Asn-215, Asn-265, and Asn-274 each carry an N-linked (GlcNAc...) asparagine glycan. The propeptide occupies 326-435 (NMKESQVLVG…AMDKVCLSHY (110 aa)). 2 disulfide bridges follow: Cys-380–Cys-414 and Cys-392–Cys-431.

Belongs to the peptidase C13 family. As to quaternary structure, homodimer before autocatalytic removal of the propeptide. Monomer after autocatalytic processing. May interact with integrins. In terms of processing, activated by autocatalytic processing at pH 4. In terms of tissue distribution, detected in kidney cortex (at protein level).

The protein localises to the lysosome. The enzyme catalyses Hydrolysis of proteins and small molecule substrates at -Asn-|-Xaa- bonds.. In terms of biological role, has a strict specificity for hydrolysis of asparaginyl bonds. Can also cleave aspartyl bonds slowly, especially under acidic conditions. Involved in the processing of proteins for MHC class II antigen presentation in the lysosomal/endosomal system. Also involved in MHC class I antigen presentation in cross-presenting dendritic cells by mediating cleavage and maturation of Perforin-2 (MPEG1), thereby promoting antigen translocation in the cytosol. Required for normal lysosomal protein degradation in renal proximal tubules. Required for normal degradation of internalized EGFR. Plays a role in the regulation of cell proliferation via its role in EGFR degradation. The polypeptide is Legumain (Lgmn) (Rattus norvegicus (Rat)).